Consider the following 61-residue polypeptide: Small ribosomal subunit protein uS14 (61 aa).

Positions 24, 27, 40, and 43 each coordinate Zn(2+).

It belongs to the universal ribosomal protein uS14 family. Zinc-binding uS14 subfamily. In terms of assembly, part of the 30S ribosomal subunit. Contacts proteins S3 and S10. Requires Zn(2+) as cofactor.

In terms of biological role, binds 16S rRNA, required for the assembly of 30S particles and may also be responsible for determining the conformation of the 16S rRNA at the A site. This chain is Small ribosomal subunit protein uS14, found in Carboxydothermus hydrogenoformans (strain ATCC BAA-161 / DSM 6008 / Z-2901).